Reading from the N-terminus, the 305-residue chain is ADP,ATP carrier protein (305 aa).

Solcar repeat units follow at residues 8–101 (SNFA…IKAM), 112–204 (KWFA…LKPL), and 212–298 (NSFL…LQVI). The next 5 helical transmembrane spans lie at 10–37 (FAIDFLMGGVSAAVSKTAAAPIERVKLL), 78–102 (TANVIRYFPTQALNFAFKDKIKAMF), 110–130 (YAKWFAGNLASGGLAGGLSLL), 180–201 (FLPSVVGIVVYRGLYFGLYDSL), and 215–235 (LASFLLGWAVTTGASTASYPL). The ADP site is built by Arg83 and Lys95. Arg239 contributes to the ADP binding site. An important for transport activity region spans residues 239–244 (RRRMMM). Positions 239–244 (RRRMMM) match the Nucleotide carrier signature motif motif. The chain crosses the membrane as a helical span at residues 275–295 (CGANILRGVAGAGVISMYDQL).

The protein belongs to the mitochondrial carrier (TC 2.A.29) family. Monomer.

The protein localises to the mitochondrion inner membrane. It carries out the reaction ADP(in) + ATP(out) = ADP(out) + ATP(in). The matrix-open state (m-state) is inhibited by the membrane-permeable bongkrekic acid (BKA). The cytoplasmic-open state (c-state) is inhibited by the membrane-impermeable toxic inhibitor carboxyatractyloside (CATR). Its function is as follows. ADP:ATP antiporter that mediates import of ADP into the mitochondrial matrix for ATP synthesis, and export of ATP out to fuel the cell. Cycles between the cytoplasmic-open state (c-state) and the matrix-open state (m-state): operates by the alternating access mechanism with a single substrate-binding site intermittently exposed to either the cytosolic (c-state) or matrix (m-state) side of the inner mitochondrial membrane. This is ADP,ATP carrier protein (AAC) from Kluyveromyces lactis (strain ATCC 8585 / CBS 2359 / DSM 70799 / NBRC 1267 / NRRL Y-1140 / WM37) (Yeast).